A 29-amino-acid chain; its full sequence is Myosin heavy chain, muscle (29 aa).

Positions 1 to 16 are enriched in basic and acidic residues; sequence SKYESEGVARSEELQE. Residues 1-29 form a disordered region; the sequence is SKYESEGVARSEELQEVHQAFADAGRKPI.

Muscle myosin is a hexameric protein that consists of 2 heavy chain subunits (MHC), 2 alkali light chain subunits (MLC) and 2 regulatory light chain subunits (MLC-2).

It is found in the cytoplasm. It localises to the myofibril. Muscle contraction. This Bombyx mori (Silk moth) protein is Myosin heavy chain, muscle.